We begin with the raw amino-acid sequence, 197 residues long: Large ribosomal subunit protein bL25 (197 aa).

Belongs to the bacterial ribosomal protein bL25 family. CTC subfamily. As to quaternary structure, part of the 50S ribosomal subunit; part of the 5S rRNA/L5/L18/L25 subcomplex. Contacts the 5S rRNA. Binds to the 5S rRNA independently of L5 and L18.

Functionally, this is one of the proteins that binds to the 5S RNA in the ribosome where it forms part of the central protuberance. The sequence is that of Large ribosomal subunit protein bL25 from Caulobacter vibrioides (strain ATCC 19089 / CIP 103742 / CB 15) (Caulobacter crescentus).